We begin with the raw amino-acid sequence, 29 residues long: GKPICGETCFKGKCYTPGCTCSYPICKKN.

The segment at residues 1 to 29 (GKPICGETCFKGKCYTPGCTCSYPICKKN) is a cross-link (cyclopeptide (Gly-Asn)). 3 disulfides stabilise this stretch: Cys5–Cys19, Cys9–Cys21, and Cys14–Cys26.

Post-translationally, this is a cyclic peptide. Contains 3 disulfide bonds.

Probably participates in a plant defense mechanism (Potential). Binds to and induces leakage in phospholipd membranes, particularly ones containing 1-palmitoyl-2-oleophosphatidylethanolamine (POPE). In vitro, displays cytotoxicity against cultured cells. Not active against Gram-negative bacterium E.coli ATCC 25922 or Gram-positive bacterium S.aureus ATCC 25923 up to a concentration of 64 uM. This chain is Cyclotide mela-4, found in Melicytus latifolius (Norfolk Island mahoe).